A 795-amino-acid chain; its full sequence is Phenylalanine--tRNA ligase beta subunit (795 aa).

Positions 39–148 (AGSFHGVVVG…ADAPIGTDIR (110 aa)) constitute a tRNA-binding domain. The 76-residue stretch at 401–476 (PKRATITLRR…RVYGYNNIPD (76 aa)) folds into the B5 domain. Residues Asp-454, Asp-460, Glu-463, and Glu-464 each coordinate Mg(2+). Residues 701–794 (SRFPANRRDI…LKERFQASLR (94 aa)) form the FDX-ACB domain.

This sequence belongs to the phenylalanyl-tRNA synthetase beta subunit family. Type 1 subfamily. Tetramer of two alpha and two beta subunits. Mg(2+) serves as cofactor.

The protein localises to the cytoplasm. It carries out the reaction tRNA(Phe) + L-phenylalanine + ATP = L-phenylalanyl-tRNA(Phe) + AMP + diphosphate + H(+). The polypeptide is Phenylalanine--tRNA ligase beta subunit (Shigella flexneri).